The sequence spans 475 residues: Ribulose bisphosphate carboxylase large chain (475 aa).

The propeptide occupies Met1–Ser2. Pro3 carries the N-acetylproline modification. Residue Lys14 is modified to N6,N6,N6-trimethyllysine. 2 residues coordinate substrate: Asn123 and Thr173. Lys175 acts as the Proton acceptor in catalysis. Lys177 contributes to the substrate binding site. Positions 201, 203, and 204 each coordinate Mg(2+). The residue at position 201 (Lys201) is an N6-carboxylysine. His294 serves as the catalytic Proton acceptor. Residues Arg295, His327, and Ser379 each coordinate substrate.

The protein belongs to the RuBisCO large chain family. Type I subfamily. As to quaternary structure, heterohexadecamer of 8 large chains and 8 small chains; disulfide-linked. The disulfide link is formed within the large subunit homodimers. It depends on Mg(2+) as a cofactor. Post-translationally, the disulfide bond which can form in the large chain dimeric partners within the hexadecamer appears to be associated with oxidative stress and protein turnover.

Its subcellular location is the plastid. It is found in the chloroplast. It catalyses the reaction 2 (2R)-3-phosphoglycerate + 2 H(+) = D-ribulose 1,5-bisphosphate + CO2 + H2O. The enzyme catalyses D-ribulose 1,5-bisphosphate + O2 = 2-phosphoglycolate + (2R)-3-phosphoglycerate + 2 H(+). RuBisCO catalyzes two reactions: the carboxylation of D-ribulose 1,5-bisphosphate, the primary event in carbon dioxide fixation, as well as the oxidative fragmentation of the pentose substrate in the photorespiration process. Both reactions occur simultaneously and in competition at the same active site. This chain is Ribulose bisphosphate carboxylase large chain, found in Pinus edulis (Pinyon pine).